A 344-amino-acid chain; its full sequence is Phosphate acyltransferase (344 aa).

The protein belongs to the PlsX family. In terms of assembly, homodimer. Probably interacts with PlsY.

The protein localises to the cytoplasm. The enzyme catalyses a fatty acyl-[ACP] + phosphate = an acyl phosphate + holo-[ACP]. It participates in lipid metabolism; phospholipid metabolism. Catalyzes the reversible formation of acyl-phosphate (acyl-PO(4)) from acyl-[acyl-carrier-protein] (acyl-ACP). This enzyme utilizes acyl-ACP as fatty acyl donor, but not acyl-CoA. The sequence is that of Phosphate acyltransferase from Cronobacter sakazakii (strain ATCC BAA-894) (Enterobacter sakazakii).